An 815-amino-acid chain; its full sequence is Kinesin heavy chain (815 aa).

The region spanning 11–329 (GVQVFCRIRP…LLFGARAKTI (319 aa)) is the Kinesin motor domain. Residue 88–95 (GQTSSGKT) participates in ATP binding. Coiled coils occupy residues 335–374 (INEELTAEEWKRRYEKEKEKNTRLAALLQAAALELSRWRA), 422–554 (PITD…LDEC), and 695–785 (PAQK…RMNA). The interval 788–815 (IVKPIRPGQVYTSPSAGMSQGAPNGSNA) is disordered. Polar residues predominate over residues 797–815 (VYTSPSAGMSQGAPNGSNA).

The protein belongs to the TRAFAC class myosin-kinesin ATPase superfamily. Kinesin family. Kinesin subfamily. In terms of assembly, oligomer composed of two heavy chains and two light chains.

It is found in the cytoplasm. The protein resides in the cytoskeleton. In terms of biological role, microtubule-dependent motor protein required for organelle transport. Plays a role in endosome transport. Required for the transport of mitochondria along the axon of motor neurons. Involved in the nuclear migration of hyp7 hypodermal precursor cells. Required for the formation of dendritic branches of PVD sensory neurons. In non-ciliated neurons such as the PVD and PHC neurons, required for the organization of minus-end out microtubules in dendrites. Also required for the minus-end out orientation of microtubules in dendrites of AQR gas-sensing neurons. Involved in the localization of unc-33 to neurites. Positively regulates cilium position and dendrite morphogenesis in the postembryonic AQR and PQR gas-sensing neurons. Plays a more prominent role in regulating dendrite morphogenesis in AQR than in PQR neurons. Plays a role in regulating the localization of grdn-1 to the distal dendrites of AQR sensory neurons. In Caenorhabditis elegans, this protein is Kinesin heavy chain.